Here is a 274-residue protein sequence, read N- to C-terminus: 3-methyl-2-oxobutanoate hydroxymethyltransferase (274 aa).

Aspartate 49 and aspartate 88 together coordinate Mg(2+). 3-methyl-2-oxobutanoate contacts are provided by residues 49–50, aspartate 88, and lysine 118; that span reads DS. Glutamate 120 is a Mg(2+) binding site. The Proton acceptor role is filled by glutamate 187.

Belongs to the PanB family. As to quaternary structure, homodecamer; pentamer of dimers. The cofactor is Mg(2+).

It is found in the cytoplasm. The catalysed reaction is 3-methyl-2-oxobutanoate + (6R)-5,10-methylene-5,6,7,8-tetrahydrofolate + H2O = 2-dehydropantoate + (6S)-5,6,7,8-tetrahydrofolate. The protein operates within cofactor biosynthesis; (R)-pantothenate biosynthesis; (R)-pantoate from 3-methyl-2-oxobutanoate: step 1/2. Functionally, catalyzes the reversible reaction in which hydroxymethyl group from 5,10-methylenetetrahydrofolate is transferred onto alpha-ketoisovalerate to form ketopantoate. The protein is 3-methyl-2-oxobutanoate hydroxymethyltransferase of Nitrobacter winogradskyi (strain ATCC 25391 / DSM 10237 / CIP 104748 / NCIMB 11846 / Nb-255).